A 144-amino-acid polypeptide reads, in one-letter code: Cell division protein SepF (144 aa).

It belongs to the SepF family. As to quaternary structure, homodimer. Interacts with FtsZ.

The protein localises to the cytoplasm. Its function is as follows. Cell division protein that is part of the divisome complex and is recruited early to the Z-ring. Probably stimulates Z-ring formation, perhaps through the cross-linking of FtsZ protofilaments. Its function overlaps with FtsA. This Geobacillus sp. (strain WCH70) protein is Cell division protein SepF.